The following is a 491-amino-acid chain: MQDSSSALESYSDVTLIGAGIMSGTLGAFLTELAPEKSLAIFEKLSAVGLESSNEWNNAGTGHSALCELNYTEQKADGEVSVERAVKICEDFQLSLQLWSYLVETGRIQAPREFIHRIPHISFVQGEQNAQFLQKRYQSLAQSHLFEGMQFSRDHQQLAQWMPLMMQNRDSNETLAASYIQYGTDVNFGELTRKLFDYLVKQKAELNLNHTVKNIQRLANGEWKLTVVDQQGQKRVHRSKFVFIGGGGGALPLLQKSGITDGKNVGGFPVSGLFMVCNNPEVIAKHNAKVYGKAKLGAPPMSVPHLDTRFIEGKQSLLFGPFAGFTLKFLKQGSVLDLPTSVTPTNFCSVTKAGIKNLPLAHYLMKQAMLTKAQRMADLREFVPDAKDEDWDVVVAGQRVQVIKGGEMRFGTEVIRAEDGSLAALLGASPGASTSVKAMLDVLVSCFAAELPQWQAKLTQMLPSYGKALRNEPQLYAQIKQRVDQVLALAN.

It belongs to the MQO family. The cofactor is FAD.

It catalyses the reaction (S)-malate + a quinone = a quinol + oxaloacetate. The protein operates within carbohydrate metabolism; tricarboxylic acid cycle; oxaloacetate from (S)-malate (quinone route): step 1/1. The sequence is that of Probable malate:quinone oxidoreductase from Actinobacillus pleuropneumoniae serotype 7 (strain AP76).